An 84-amino-acid chain; its full sequence is Sulfur carrier protein TusA (84 aa).

Cysteine 19 (cysteine persulfide intermediate) is an active-site residue.

Belongs to the sulfur carrier protein TusA family. As to quaternary structure, interacts with IscS.

The protein resides in the cytoplasm. Its pathway is tRNA modification. Its function is as follows. Sulfur carrier protein involved in sulfur trafficking in the cell. Part of a sulfur-relay system required for 2-thiolation during synthesis of 2-thiouridine of the modified wobble base 5-methylaminomethyl-2-thiouridine (mnm(5)s(2)U) in tRNA. Interacts with IscS and stimulates its cysteine desulfurase activity. Accepts an activated sulfur from IscS, which is then transferred to TusD, and thus determines the direction of sulfur flow from IscS to 2-thiouridine formation. Also appears to be involved in sulfur transfer for the biosynthesis of molybdopterin. The protein is Sulfur carrier protein TusA of Proteus mirabilis (strain HI4320).